A 482-amino-acid chain; its full sequence is Dihydrolipoyllysine-residue acetyltransferase component of pyruvate dehydrogenase complex, mitochondrial (482 aa).

Residues 1-28 (MSAFVRVVPRISRSSVLTRSLRLQLRCY) constitute a mitochondrion transit peptide. The Lipoyl-binding domain occupies 34 to 110 (HTIIGMPALS…PVNKPIAVYV (77 aa)). Lysine 75 is subject to N6-lipoyllysine. The interval 122 to 170 (FKLEDSGSDSKTSTKAQPAEPQAEKKQEAPAEETKTSAPEAKKSDVAAP) is disordered. Residues 143–166 (QAEKKQEAPAEETKTSAPEAKKSD) show a composition bias toward basic and acidic residues. Residues 175–212 (FASPLAKTIALEKGISLKDVHGTGPRGRITKADIESYL) form the Peripheral subunit-binding (PSBD) domain. The interval 214–251 (KSSKQSSQTSGAAAATPAAATSSTTAGSAPSPSSTASY) is disordered. Positions 217–250 (KQSSQTSGAAAATPAAATSSTTAGSAPSPSSTAS) are enriched in low complexity. Residues histidine 455 and aspartate 459 contribute to the active site.

The protein belongs to the 2-oxoacid dehydrogenase family. As to quaternary structure, eukaryotic pyruvate dehydrogenase (PDH) complexes are organized as a core consisting of the oligomeric dihydrolipoamide acetyl-transferase (E2), around which are arranged multiple copies of pyruvate dehydrogenase (E1), dihydrolipoamide dehydrogenase (E3) and protein X (E3BP) bound by non-covalent bonds. Requires (R)-lipoate as cofactor.

It localises to the mitochondrion matrix. It carries out the reaction N(6)-[(R)-dihydrolipoyl]-L-lysyl-[protein] + acetyl-CoA = N(6)-[(R)-S(8)-acetyldihydrolipoyl]-L-lysyl-[protein] + CoA. In terms of biological role, the pyruvate dehydrogenase complex catalyzes the overall conversion of pyruvate to acetyl-CoA and CO(2). The sequence is that of Dihydrolipoyllysine-residue acetyltransferase component of pyruvate dehydrogenase complex, mitochondrial (LAT1) from Saccharomyces cerevisiae (strain ATCC 204508 / S288c) (Baker's yeast).